Here is a 275-residue protein sequence, read N- to C-terminus: COP9 signalosome complex subunit 7a (275 aa).

Ser-2 is modified (N-acetylserine). Positions 2–159 (SAEVKVTGQN…QRLEVDYSIG (158 aa)) constitute a PCI domain. Residues 185 to 233 (LSGIEEQVSRANQHKEQQLGLKQQIESEVANLKKTIKVTTAAAAAATSQ) are a coiled coil. The interval 228 to 275 (AAATSQDPEQHLTELREPASGTNQRQPSKKASKGKGLRGSAKIWSKSN) is disordered. Positions 235 to 244 (PEQHLTELRE) are enriched in basic and acidic residues. Positions 254–263 (PSKKASKGKG) are enriched in basic residues.

The protein belongs to the CSN7/EIF3M family. CSN7 subfamily. As to quaternary structure, component of the CSN complex, composed of COPS1/GPS1, COPS2, COPS3, COPS4, COPS5, COPS6, COPS7 (COPS7A or COPS7B), COPS8 and COPS9. In the complex, it probably interacts directly with COPS1, COPS2, COPS4, COPS5, COPS6 and COPS8. Interacts with PMF1. Interacts with the translation initiation factor EIF3S6. Interacts with CK2 and PKD. Interacts directly with ID3. Phosphorylated by CK2 and PKD kinases.

It localises to the cytoplasm. Its subcellular location is the nucleus. Its function is as follows. Component of the COP9 signalosome complex (CSN), a complex involved in various cellular and developmental processes. The CSN complex is an essential regulator of the ubiquitin (Ubl) conjugation pathway by mediating the deneddylation of the cullin subunits of SCF-type E3 ligase complexes, leading to decrease the Ubl ligase activity of SCF-type complexes such as SCF, CSA or DDB2. The complex is also involved in phosphorylation of p53/TP53, JUN, I-kappa-B-alpha/NFKBIA, ITPK1 and IRF8/ICSBP, possibly via its association with CK2 and PKD kinases. CSN-dependent phosphorylation of TP53 and JUN promotes and protects degradation by the Ubl system, respectively. In Mus musculus (Mouse), this protein is COP9 signalosome complex subunit 7a (Cops7a).